Consider the following 88-residue polypeptide: Large ribosomal subunit protein eL34 (88 aa).

It belongs to the eukaryotic ribosomal protein eL34 family.

This is Large ribosomal subunit protein eL34 from Methanobrevibacter smithii (strain ATCC 35061 / DSM 861 / OCM 144 / PS).